We begin with the raw amino-acid sequence, 632 residues long: Transcription factor tazR (632 aa).

The zn(2)-C6 fungal-type DNA-binding region spans 20 to 47 (CNECRARKLRCDRVRPTCGTCESLGVTC). Residues 77-130 (WNGQQKAAGGSPGESPPCSEGGQTLRAVSESTSDGVHDEDHANGARPPSSQSSI) form a disordered region.

It localises to the nucleus. Transcription factor that regulates the expression of the gene cluster that mediates the biosynthesis of azaterrilone A and other azaphilones, a class of fungal metabolites characterized by a highly oxygenated pyrano-quinone bicyclic core and exhibiting a broad range of bioactivities. This Aspergillus terreus (strain NIH 2624 / FGSC A1156) protein is Transcription factor tazR.